Here is a 436-residue protein sequence, read N- to C-terminus: UDP-N-acetylmuramate--L-alanine ligase (436 aa).

108 to 114 (GAHGKTS) contacts ATP.

The protein belongs to the MurCDEF family.

The protein localises to the cytoplasm. It catalyses the reaction UDP-N-acetyl-alpha-D-muramate + L-alanine + ATP = UDP-N-acetyl-alpha-D-muramoyl-L-alanine + ADP + phosphate + H(+). It functions in the pathway cell wall biogenesis; peptidoglycan biosynthesis. Cell wall formation. In Bacillus cereus (strain G9842), this protein is UDP-N-acetylmuramate--L-alanine ligase.